We begin with the raw amino-acid sequence, 450 residues long: MSRRYFGTDGIRGRANGLITPELALKVGQAAGLAFQRGEHRHRVVIGKDTRLSGYMIENALVAGFTSVGMDVLLVGPMPTPAVAMLTKSMRADLGVMISASHNLFEDNGIKLFGPLGYKLSDDVEKQIELMLDESLDKKLAQSASLGRARRIDGVHDRYIEFAKRTLPRELSLEGLRVVIDCANGAAYKVVPEALWELGADVISIGVEPDGFNINKECGSTAPQALCAKVREMRADIGIALDGDADRVILVDERGHVVDGDQLLAVIGQSWKEDGRLAKPGVVATVMSNLGLERFLAGEGIALLRTPVGDRYVLEQMLKDGYNVGGESSGHIILSDFNTTGDGFVAALQVLAMVQKLGRPVSEVCRRFDPLPQILKNVRYRSGRPLDDSGVISAIQDGEKRLNGHGRLLIRPSGTEPVIRVMGEGDDRDVVEEVVDSIVDALGNAAAAAA.

Ser101 (phosphoserine intermediate) is an active-site residue. Residues Ser101, Asp242, Asp244, and Asp246 each coordinate Mg(2+). Ser101 is subject to Phosphoserine.

This sequence belongs to the phosphohexose mutase family. Requires Mg(2+) as cofactor. Post-translationally, activated by phosphorylation.

The catalysed reaction is alpha-D-glucosamine 1-phosphate = D-glucosamine 6-phosphate. Functionally, catalyzes the conversion of glucosamine-6-phosphate to glucosamine-1-phosphate. The protein is Phosphoglucosamine mutase of Rhodopseudomonas palustris (strain TIE-1).